The chain runs to 538 residues: Chaperonin GroEL 2 (538 aa).

Residues 29 to 32, 86 to 90, glycine 412, 479 to 481, and aspartate 495 each bind ATP; these read TLGP, DGTTT, and NAA.

This sequence belongs to the chaperonin (HSP60) family. In terms of assembly, forms a cylinder of 14 subunits composed of two heptameric rings stacked back-to-back. Interacts with the co-chaperonin GroES.

The protein localises to the cytoplasm. It carries out the reaction ATP + H2O + a folded polypeptide = ADP + phosphate + an unfolded polypeptide.. Together with its co-chaperonin GroES, plays an essential role in assisting protein folding. The GroEL-GroES system forms a nano-cage that allows encapsulation of the non-native substrate proteins and provides a physical environment optimized to promote and accelerate protein folding. The chain is Chaperonin GroEL 2 from Renibacterium salmoninarum (strain ATCC 33209 / DSM 20767 / JCM 11484 / NBRC 15589 / NCIMB 2235).